Here is a 303-residue protein sequence, read N- to C-terminus: Pseudouridine-5'-phosphate glycosidase (303 aa).

Residue glutamate 26 is the Proton donor of the active site. The substrate site is built by lysine 87 and valine 107. Mn(2+) is bound at residue aspartate 139. Position 141–143 (serine 141–aspartate 143) interacts with substrate. Lysine 160 functions as the Nucleophile in the catalytic mechanism.

This sequence belongs to the pseudouridine-5'-phosphate glycosidase family. As to quaternary structure, homotrimer. Mn(2+) serves as cofactor.

The enzyme catalyses D-ribose 5-phosphate + uracil = psi-UMP + H2O. In terms of biological role, catalyzes the reversible cleavage of pseudouridine 5'-phosphate (PsiMP) to ribose 5-phosphate and uracil. Functions biologically in the cleavage direction, as part of a pseudouridine degradation pathway. In Saccharopolyspora erythraea (strain ATCC 11635 / DSM 40517 / JCM 4748 / NBRC 13426 / NCIMB 8594 / NRRL 2338), this protein is Pseudouridine-5'-phosphate glycosidase.